A 3961-amino-acid polypeptide reads, in one-letter code: Hybrid PKS-NRPS synthetase phm1 (3961 aa).

Residues 4–436 form the Ketosynthase family 3 (KS3) domain; the sequence is SEPIAIIGSA…GTNAHAIVEA (433 aa). Active-site for beta-ketoacyl synthase activity residues include Cys178, His317, and His356. The malonyl-CoA:ACP transacylase (MAT) domain stretch occupies residues 541–867; sequence VFTGQGAQWP…RSKNDILELS (327 aa). An N-terminal hotdog fold region spans residues 933 to 1068; it reads HPILGKRCLE…GTVTVTLAEP (136 aa). The tract at residues 933 to 1234 is dehydratase (DH) domain; sequence HPILGKRCLE…LELVPFTAAR (302 aa). One can recognise a PKS/mFAS DH domain in the interval 933-1236; it reads HPILGKRCLE…LVPFTAARPE (304 aa). His966 functions as the Proton acceptor; for dehydratase activity in the catalytic mechanism. The interval 1083–1236 is C-terminal hotdog fold; sequence MTEIEVDRFY…LVPFTAARPE (154 aa). Asp1143 serves as the catalytic Proton donor; for dehydratase activity. The segment at 1376 to 1569 is methyltransferase (MT) domain; that stretch reads FDFYDQGLGL…GFGGIDTSTP (194 aa). The tract at residues 2106–2277 is ketoreductase (KR) domain; the sequence is TYLLIGMSGQ…GVPGSAISIS (172 aa). The region spanning 2386–2464 is the Carrier 1 domain; that stretch reads QAATIIKDGF…ELLQEAMDRT (79 aa). Residue Ser2424 is modified to O-(pantetheine 4'-phosphoryl)serine. The interval 2482–2527 is disordered; sequence PVTNTATPPPEVQVTGSASDSSRSLTPDGLSTSRPSTPVRTPMTEI. A compositionally biased stretch (polar residues) spans 2495–2520; it reads VTGSASDSSRSLTPDGLSTSRPSTPV. The tract at residues 2553–2993 is condensation (C) domain; it reads PMSYGQARFW…DLPRWAGADV (441 aa). Positions 3019-3424 are adenylation (A) (KR) domain; the sequence is QMIGTYASKP…DGALFVHGRI (406 aa). The Carrier 2 domain occupies 3542 to 3616; sequence ANMEGRVAAL…GMARHVRAAF (75 aa). Ser3576 carries the post-translational modification O-(pantetheine 4'-phosphoryl)serine. Residues 3725-3871 are reductase (RED) domain; the sequence is ITDIVFHCAA…VRPVSDVATT (147 aa).

This sequence in the C-terminal section; belongs to the NRP synthetase family.

It participates in secondary metabolite biosynthesis. In terms of biological role, hybrid PKS-NRPS synthetase; part of the gene cluster that mediates the biosynthesis of the trans-fused decalin-containing tetramic acid phomasetin, the stereochemical opposite of the HIV-1 integrase inhibitor equisetin. The PKS module of phm1 together with the enoylreductase phm4 catalyze the formation of the polyketide unit which is then conjugated to L-serine by the condensation domain of the phm1 NRPS module. Activity of the Dieckmann cyclase domain (RED) of phm1 results in release of the Dieckmann product intermediate. The Diels-Alderase phm7 then uses the Dieckmann product of phm1 as substrate and catalyzes the Diels-Alder cycloaddition to form the decalin ring of N-desmethylphomasetin. N-desmethylphomasetin is further methylated to phomasetin by the methyltransferase phm5. This is Hybrid PKS-NRPS synthetase phm1 from Pyrenochaetopsis sp.